The chain runs to 440 residues: L-seryl-tRNA(Sec) selenium transferase (440 aa).

N6-(pyridoxal phosphate)lysine is present on K282.

Belongs to the SelA family. The cofactor is pyridoxal 5'-phosphate.

Its subcellular location is the cytoplasm. The catalysed reaction is L-seryl-tRNA(Sec) + selenophosphate + H(+) = L-selenocysteinyl-tRNA(Sec) + phosphate. The protein operates within aminoacyl-tRNA biosynthesis; selenocysteinyl-tRNA(Sec) biosynthesis; selenocysteinyl-tRNA(Sec) from L-seryl-tRNA(Sec) (bacterial route): step 1/1. Functionally, converts seryl-tRNA(Sec) to selenocysteinyl-tRNA(Sec) required for selenoprotein biosynthesis. This Campylobacter jejuni subsp. doylei (strain ATCC BAA-1458 / RM4099 / 269.97) protein is L-seryl-tRNA(Sec) selenium transferase.